The chain runs to 130 residues: MSLMDPLANALNHISNCERVGKKVVYIKPASKLIGRVLKVMQDNGYIGEFEFIEDGRAGIFKVELIGKINKCGAIKPRFPVKKFGYEKFEKRYLPARDFGILIVSTTQGVMSHEEAKKRGLGGRLLAYVY.

The protein belongs to the universal ribosomal protein uS8 family. As to quaternary structure, part of the 30S ribosomal subunit.

Its function is as follows. One of the primary rRNA binding proteins, it binds directly to 16S rRNA central domain where it helps coordinate assembly of the platform of the 30S subunit. This chain is Small ribosomal subunit protein uS8 (rps8), found in Methanocaldococcus jannaschii (strain ATCC 43067 / DSM 2661 / JAL-1 / JCM 10045 / NBRC 100440) (Methanococcus jannaschii).